Consider the following 121-residue polypeptide: Large ribosomal subunit protein bL12 (121 aa).

The protein belongs to the bacterial ribosomal protein bL12 family. In terms of assembly, homodimer. Part of the ribosomal stalk of the 50S ribosomal subunit. Forms a multimeric L10(L12)X complex, where L10 forms an elongated spine to which 2 to 4 L12 dimers bind in a sequential fashion. Binds GTP-bound translation factors.

Its function is as follows. Forms part of the ribosomal stalk which helps the ribosome interact with GTP-bound translation factors. Is thus essential for accurate translation. The protein is Large ribosomal subunit protein bL12 of Lactococcus lactis subsp. cremoris (strain MG1363).